Reading from the N-terminus, the 184-residue chain is Ribosome-recycling factor (184 aa).

Belongs to the RRF family.

It localises to the cytoplasm. Functionally, responsible for the release of ribosomes from messenger RNA at the termination of protein biosynthesis. May increase the efficiency of translation by recycling ribosomes from one round of translation to another. In Staphylococcus carnosus (strain TM300), this protein is Ribosome-recycling factor.